The chain runs to 314 residues: WD repeat domain-containing protein 83 (314 aa).

WD repeat units follow at residues 23-62 (CNQGAVRAVRFNVDGNYCMTCGSDKSLKLWNPHKGSLLKT), 65-104 (GHGYEVLDTAGSCDNSQLCSCSSDKTVILWDVAQGQVVRK), 107-146 (GHAGKVNCVQFNEEATVIISGSIDSSIRCWDCRSRRPDAI), 151-188 (EAKDGISSVKVSAHEILAGSVDGNLRRYDLRKGEMCAD), 189-228 (YLGSPITCVSFSQDSQCLLASSLDSTLRLLDKDTGELLGE), 231-272 (GHQN…LVLK), and 275-313 (VGKAVVQSLSFHPTECCLLTASEGGVQVWRGASYEEEGG).

Belongs to the WD repeat MORG1 family.

Its subcellular location is the cytoplasm. Functionally, molecular scaffold protein for various multimeric protein complexes. Acts as a module in the assembly of a multicomponent scaffold for the ERK pathway, linking ERK responses to specific agonists. Also involved in response to hypoxia by acting as a negative regulator of HIF1A/HIF-1-alpha. This chain is WD repeat domain-containing protein 83 (wdr83), found in Xenopus laevis (African clawed frog).